We begin with the raw amino-acid sequence, 362 residues long: Phosphoserine aminotransferase (362 aa).

Residues S9 and R42 each coordinate L-glutamate. Residues 76-77 (GR), W102, T153, D174, and Q197 each bind pyridoxal 5'-phosphate. K198 is modified (N6-(pyridoxal phosphate)lysine). 239-240 (NT) is a binding site for pyridoxal 5'-phosphate.

It belongs to the class-V pyridoxal-phosphate-dependent aminotransferase family. SerC subfamily. In terms of assembly, homodimer. Requires pyridoxal 5'-phosphate as cofactor.

It is found in the cytoplasm. It carries out the reaction O-phospho-L-serine + 2-oxoglutarate = 3-phosphooxypyruvate + L-glutamate. It catalyses the reaction 4-(phosphooxy)-L-threonine + 2-oxoglutarate = (R)-3-hydroxy-2-oxo-4-phosphooxybutanoate + L-glutamate. It participates in amino-acid biosynthesis; L-serine biosynthesis; L-serine from 3-phospho-D-glycerate: step 2/3. The protein operates within cofactor biosynthesis; pyridoxine 5'-phosphate biosynthesis; pyridoxine 5'-phosphate from D-erythrose 4-phosphate: step 3/5. Its function is as follows. Catalyzes the reversible conversion of 3-phosphohydroxypyruvate to phosphoserine and of 3-hydroxy-2-oxo-4-phosphonooxybutanoate to phosphohydroxythreonine. In Escherichia coli O127:H6 (strain E2348/69 / EPEC), this protein is Phosphoserine aminotransferase.